A 176-amino-acid chain; its full sequence is Protein GrpE (176 aa).

It belongs to the GrpE family. As to quaternary structure, homodimer.

The protein localises to the cytoplasm. Functionally, participates actively in the response to hyperosmotic and heat shock by preventing the aggregation of stress-denatured proteins, in association with DnaK and GrpE. It is the nucleotide exchange factor for DnaK and may function as a thermosensor. Unfolded proteins bind initially to DnaJ; upon interaction with the DnaJ-bound protein, DnaK hydrolyzes its bound ATP, resulting in the formation of a stable complex. GrpE releases ADP from DnaK; ATP binding to DnaK triggers the release of the substrate protein, thus completing the reaction cycle. Several rounds of ATP-dependent interactions between DnaJ, DnaK and GrpE are required for fully efficient folding. This is Protein GrpE from Rickettsia bellii (strain OSU 85-389).